The sequence spans 457 residues: Nuclear distribution protein PAC1 (457 aa).

A coiled-coil region spans residues 73 to 106 (SSIVRLQRRIIELEKEIQELTDENENLRENGPSS). 7 WD repeats span residues 126–165 (SAGA…MPVA), 169–211 (AHMR…LQLI), 216–257 (GHEH…CLKS), 260–299 (PHTE…SFGT), 322–362 (SHRF…FVAH), 382–419 (GHSS…VVRS), and 423–457 (LHSG…ILMK).

The protein belongs to the WD repeat LIS1/nudF family. In terms of assembly, self-associates. Interacts with NDL1 and dynein.

It is found in the cytoplasm. Its subcellular location is the cytoskeleton. The protein resides in the spindle pole. Its function is as follows. Positively regulates the activity of the minus-end directed microtubule motor protein dynein. Plays a central role in positioning the mitotic spindle at the bud neck during cell division. Targets cytoplasmic dynein to microtubule plus ends, thereby promoting dynein-mediated microtubule sliding along the bud cortex and consequently the movement of the mitotic spindle to the bud neck. This is Nuclear distribution protein PAC1 from Lachancea thermotolerans (strain ATCC 56472 / CBS 6340 / NRRL Y-8284) (Yeast).